The following is a 1034-amino-acid chain: Potassium-transporting ATPase alpha chain 1 (1034 aa).

Residues 1-97 are Cytoplasmic-facing; sequence MGKAENYEMY…NALRPPRGTP (97 aa). Phosphotyrosine is present on residues tyrosine 7 and tyrosine 10. The disordered stretch occupies residues 14-41; sequence LGPGPGGDMAAKMSKKKAGKGGGKKKEK. The segment covering 26-39 has biased composition (basic residues); that stretch reads MSKKKAGKGGGKKK. Serine 27 is subject to Phosphoserine. A helical membrane pass occupies residues 98–118; that stretch reads EYVKFARQLAGGLQCLMWVAA. The Lumenal segment spans residues 119–141; sequence AICLIAFAIQASEGDLTTDDNLY. Residues 142 to 162 traverse the membrane as a helical segment; that stretch reads LALALIAVVVVTGCFGYYQEF. Over 163–298 the chain is Cytoplasmic; the sequence is KSTNIIASFK…NEKTPIAIEI (136 aa). The segment covering 225 to 239 has biased composition (polar residues); the sequence is NSSLTGESEPQTRSP. The segment at 225 to 245 is disordered; that stretch reads NSSLTGESEPQTRSPECTHES. The helical transmembrane segment at 299 to 318 threads the bilayer; the sequence is EHFVDIIAGLAILFGATFFV. Residues 319-330 lie on the Lumenal side of the membrane; it reads VAMCIGYTFLRA. Residues 331–348 traverse the membrane as a helical segment; the sequence is MVFFMAIVVAYVPEGLLA. Residues valine 339, alanine 340, valine 342, and glutamate 344 each contribute to the K(+) site. The Cytoplasmic segment spans residues 349–782; sequence TVTVCLSLTA…EQGRLIFDNL (434 aa). The 4-aspartylphosphate intermediate role is filled by aspartate 386. Aspartate 386 and threonine 388 together coordinate Mg(2+). Phosphoserine occurs at positions 462 and 600. Positions 727 and 731 each coordinate Mg(2+). Residues 783 to 802 form a helical membrane-spanning segment; that stretch reads KKSIAYTLTKNIPELTPYLI. Glutamate 796 is a binding site for K(+). Over 803–812 the chain is Lumenal; sequence YITVSVPLPL. The chain crosses the membrane as a helical span at residues 813–833; that stretch reads GCITILFIELCTDIFPSVSLA. Glutamate 821 provides a ligand contact to K(+). The Cytoplasmic segment spans residues 834–853; sequence YEKAESDIMHLRPRNPKRDR. The residue at position 839 (serine 839) is a Phosphoserine. A helical transmembrane segment spans residues 854–876; it reads LVNEPLAAYSYFQIGAIQSFAGF. Residues 877–928 are Lumenal-facing; it reads TDYFTAMAQEGWFPLLCVGLRPYWENHHLQDLQDSYGQEWTFGQRLYQQYTC. A helical transmembrane segment spans residues 929-948; that stretch reads YTVFFISIEMCQIADVLIRK. Residues 949-962 are Cytoplasmic-facing; the sequence is TRRLSAFQQGFFRN. Residue serine 953 is modified to Phosphoserine; by PKA. A helical membrane pass occupies residues 963–981; sequence RILVIAIVFQVCIGCFLCY. Topologically, residues 982–996 are lumenal; it reads CPGMPNIFNFMPIRY. A helical membrane pass occupies residues 997 to 1017; it reads QWWLVPMPFGLLIFVYDEIRK. At 1018–1034 the chain is on the cytoplasmic side; that stretch reads LGVRCCPGSWWDQELYY.

The protein belongs to the cation transport ATPase (P-type) (TC 3.A.3) family. Type IIC subfamily. In terms of assembly, the gastric H(+)/K(+) ATPase pump is composed of the catalytic alpha subunit ATP4A and the regulatory beta subunit ATP4B. Interacts (via the P-domain) with ATP4B (via N-terminus); this interaction stabilizes the lumenal-open E2 conformation state and prevents the reverse reaction of the transport cycle.

The protein resides in the apical cell membrane. The catalysed reaction is K(+)(out) + ATP + H2O + H(+)(in) = K(+)(in) + ADP + phosphate + 2 H(+)(out). The catalytic subunit of the gastric H(+)/K(+) ATPase pump which transports H(+) ions in exchange for K(+) ions across the apical membrane of parietal cells. Uses ATP as an energy source to pump H(+) ions to the gastric lumen while transporting K(+) ion from the lumen into the cell. Remarkably generates a million-fold proton gradient across the gastric parietal cell membrane, acidifying the gastric juice down to pH 1. Within a transport cycle, the transfer of a H(+) ion across the membrane is coupled to ATP hydrolysis and is associated with a transient phosphorylation that shifts the pump conformation from inward-facing (E1) to outward-facing state (E2). The release of the H(+) ion in the stomach lumen is followed by binding of K(+) ion converting the pump conformation back to the E1 state. In Canis lupus familiaris (Dog), this protein is Potassium-transporting ATPase alpha chain 1 (ATP4A).